The following is a 337-amino-acid chain: Monoacylglycerol lipase ABHD6 (337 aa).

The Extracellular segment spans residues 1–19; sequence MDLDVVNMFVIAGGTLALP. A helical; Signal-anchor for type II membrane protein membrane pass occupies residues 20–42; that stretch reads ILAFVASFLLWPSALIRIYYWYW. Over 43-337 the chain is Cytoplasmic; the sequence is RRTLGMQVRY…HSTDNSKKLD (295 aa). An AB hydrolase-1 domain is found at 72 to 313; it reads PSILMLHGFS…CGHSVVMERP (242 aa). The Nucleophile role is filled by Ser-148. Residues Asp-278 and His-306 each act as charge relay system in the active site.

The protein belongs to the AB hydrolase superfamily.

It is found in the late endosome membrane. It localises to the lysosome membrane. The protein resides in the mitochondrion membrane. The catalysed reaction is Hydrolyzes glycerol monoesters of long-chain fatty acids.. It catalyses the reaction 1-octanoylglycerol + H2O = octanoate + glycerol + H(+). It carries out the reaction 1-decanoylglycerol + H2O = decanoate + glycerol + H(+). The enzyme catalyses 1-dodecanoylglycerol + H2O = dodecanoate + glycerol + H(+). The catalysed reaction is 1-tetradecanoylglycerol + H2O = tetradecanoate + glycerol + H(+). It catalyses the reaction 2-hexadecanoylglycerol + H2O = glycerol + hexadecanoate + H(+). It carries out the reaction 2-(9Z-octadecenoyl)-glycerol + H2O = glycerol + (9Z)-octadecenoate + H(+). The enzyme catalyses 1-(9Z-octadecenoyl)-glycerol + H2O = glycerol + (9Z)-octadecenoate + H(+). The catalysed reaction is 2-(9Z,12Z-octadecadienoyl)-glycerol + H2O = (9Z,12Z)-octadecadienoate + glycerol + H(+). It catalyses the reaction 2-(5Z,8Z,11Z,14Z-eicosatetraenoyl)-glycerol + H2O = glycerol + (5Z,8Z,11Z,14Z)-eicosatetraenoate + H(+). It carries out the reaction 1-(5Z,8Z,11Z,14Z-eicosatetraenoyl)-glycerol + H2O = glycerol + (5Z,8Z,11Z,14Z)-eicosatetraenoate + H(+). The enzyme catalyses 1-(9Z,12Z-octadecadienoyl)-glycerol + H2O = (9Z,12Z)-octadecadienoate + glycerol + H(+). The catalysed reaction is 3-(9Z-octadecenoyl)-sn-glycero-1-phospho-(3'-(9Z-octadecenoyl)-1'-sn-glycerol) + H2O = 3-(9Z-octadecenoyl)-sn-glycero-1-phospho-(1'-sn-glycerol) + (9Z)-octadecenoate + H(+). It catalyses the reaction (S,S)-2-(9Z-octadecenoyl)-sn-glycero-1-phospho-(2'-(9Z-octadecenoyl)-1'-sn-glycerol) + H2O = (S,S)-2-(9Z-octadecenoyl)-sn-glycero-1-phospho-(1'-sn-glycerol) + (9Z)-octadecenoate + H(+). It carries out the reaction (R,R)-2-(9Z-octadecenoyl)-sn-glycero-3-phospho-(2'-(9Z-octadecenoyl)-3'-sn-glycerol) + H2O = (R,R)-2-(9Z-octadecenoyl)-sn-glycero-3-phospho-(3'-sn-glycerol) + (9Z)-octadecenoate + H(+). Lipase that preferentially hydrolysis medium-chain saturated monoacylglycerols including 2-arachidonoylglycerol. Through 2-arachidonoylglycerol degradation may regulate endocannabinoid signaling pathways. Also has a lysophosphatidyl lipase activity with a preference for lysophosphatidylglycerol among other lysophospholipids. Also able to degrade bis(monoacylglycero)phosphate (BMP) and constitutes the major enzyme for BMP catabolism. BMP, also known as lysobisphosphatidic acid, is enriched in late endosomes and lysosomes and plays a key role in the formation of intraluminal vesicles and in lipid sorting. The sequence is that of Monoacylglycerol lipase ABHD6 from Bos taurus (Bovine).